Reading from the N-terminus, the 118-residue chain is MEMKNMVVGLFLIAAFALPALATNFEKDFITHETVQAILKKVGPSSNGMLDEQTISALTGKTIISNPVLEEALLTHSNSINALGGTLPCGESCVWIPCISSVVGCSCKSKVCYKNSLA.

The signal sequence occupies residues 1–22; that stretch reads MEMKNMVVGLFLIAAFALPALA. The propeptide occupies 23–84; that stretch reads TNFEKDFITH…THSNSINALG (62 aa). The cyclopeptide (Gly-Asn) cross-link spans 85–115; that stretch reads GTLPCGESCVWIPCISSVVGCSCKSKVCYKN. Intrachain disulfides connect cysteine 89-cysteine 105, cysteine 93-cysteine 107, and cysteine 98-cysteine 112. A propeptide spanning residues 116-118 is cleaved from the precursor; that stretch reads SLA.

Cycloviolacin-O8 is a cyclic peptide. Expressed in leaves, petals, petioles and roots but not in runners (at protein level).

Functionally, probably participates in a plant defense mechanism. The chain is Cycloviolacin-O8 (Voc1) from Viola odorata (Sweet violet).